The following is a 394-amino-acid chain: Mitogen-activated protein kinase homolog D5 (394 aa).

Positions 62-347 (RPPIMPIGKG…VENALAHPYL (286 aa)) constitute a Protein kinase domain. ATP contacts are provided by residues 68–76 (IGKGAYGIV) and K91. Catalysis depends on D188, which acts as the Proton acceptor. A Phosphothreonine modification is found at T220. The short motif at 220–222 (TEY) is the TXY element. Y222 carries the post-translational modification Phosphotyrosine.

It belongs to the protein kinase superfamily. CMGC Ser/Thr protein kinase family. MAP kinase subfamily. The cofactor is Mg(2+). Dually phosphorylated on Thr-220 and Tyr-222, which activates the enzyme. As to expression, leaves, roots, root apices, and dormant and growing axillary buds.

It catalyses the reaction L-seryl-[protein] + ATP = O-phospho-L-seryl-[protein] + ADP + H(+). The enzyme catalyses L-threonyl-[protein] + ATP = O-phospho-L-threonyl-[protein] + ADP + H(+). Its activity is regulated as follows. Activated by tyrosine and threonine phosphorylation. The chain is Mitogen-activated protein kinase homolog D5 from Pisum sativum (Garden pea).